Here is a 352-residue protein sequence, read N- to C-terminus: MADSGHSISVTFPSFHSGGKEHIIRTGCGSVSVTVCGDQEKPPLITYPDLALNHMSCFQGLFVSPESASLLLHNFCIYHINPPGHELGAASIGIDDPVPSIEDLCDQILVVLNYFRLGSVMCMGAMAGAYILTLFSIKYSERVTGLILISPICKAPSWTERFYNKLTSKTLYYYGMCDLVKELLIHRYFSKEVCGNPEIPESDMVLACRKLLDERDSVNVWRYLQAIDSRRDITEELKSLECKTIIFVGDSSPFHDEALQIAEKLGTNCSALVEVHACGSMVTQEQPHAMLIPLENFLKGFGLYRPCRYSNSPRSPLGPSSIDPELLYPEKMGLKLRPIKLRVSPQPRAHKN.

It belongs to the NDRG family. In terms of tissue distribution, pollen.

This chain is Pollen-specific protein SF21 (SF21), found in Helianthus annuus (Common sunflower).